Here is a 236-residue protein sequence, read N- to C-terminus: Phosphoribosylaminoimidazole-succinocarboxamide synthase (236 aa).

It belongs to the SAICAR synthetase family.

It carries out the reaction 5-amino-1-(5-phospho-D-ribosyl)imidazole-4-carboxylate + L-aspartate + ATP = (2S)-2-[5-amino-1-(5-phospho-beta-D-ribosyl)imidazole-4-carboxamido]succinate + ADP + phosphate + 2 H(+). It functions in the pathway purine metabolism; IMP biosynthesis via de novo pathway; 5-amino-1-(5-phospho-D-ribosyl)imidazole-4-carboxamide from 5-amino-1-(5-phospho-D-ribosyl)imidazole-4-carboxylate: step 1/2. The chain is Phosphoribosylaminoimidazole-succinocarboxamide synthase from Pseudomonas putida (strain GB-1).